A 227-amino-acid chain; its full sequence is 7-cyano-7-deazaguanine synthase (227 aa).

7–17 (LSGGMDSLVTT) serves as a coordination point for ATP. The Zn(2+) site is built by Cys187, Cys195, Cys198, and Cys201.

It belongs to the QueC family. Zn(2+) serves as cofactor.

It carries out the reaction 7-carboxy-7-deazaguanine + NH4(+) + ATP = 7-cyano-7-deazaguanine + ADP + phosphate + H2O + H(+). It participates in purine metabolism; 7-cyano-7-deazaguanine biosynthesis. Catalyzes the ATP-dependent conversion of 7-carboxy-7-deazaguanine (CDG) to 7-cyano-7-deazaguanine (preQ(0)). In Chlorobium phaeovibrioides (strain DSM 265 / 1930) (Prosthecochloris vibrioformis (strain DSM 265)), this protein is 7-cyano-7-deazaguanine synthase.